We begin with the raw amino-acid sequence, 464 residues long: Protein FAM90A12 (464 aa).

Disordered stretches follow at residues Met-1–Leu-42, Pro-70–Ala-389, and Ala-411–Pro-437. 2 stretches are compositionally biased toward basic and acidic residues: residues Gly-74–Ala-89 and Asn-97–Arg-114. Residues Leu-180–Leu-197 show a composition bias toward low complexity.

It belongs to the FAM90 family.

This Homo sapiens (Human) protein is Protein FAM90A12.